Consider the following 604-residue polypeptide: Tyrosine-protein kinase transforming protein erbB (604 aa).

Positions 132 to 399 (FKKVKVLGSG…KMARDPPRYL (268 aa)) constitute a Protein kinase domain. ATP contacts are provided by residues 138-146 (LGSGAFGTI) and Lys-165. Asp-257 acts as the Proton acceptor in catalysis.

It belongs to the protein kinase superfamily. Tyr protein kinase family. EGF receptor subfamily.

The enzyme catalyses L-tyrosyl-[protein] + ATP = O-phospho-L-tyrosyl-[protein] + ADP + H(+). The v-erbB oncogene transforms avian fibroblasts and erythroblasts in culture and induces sarcomas and erythroleukemias in chickens. It is a truncated and mutated version of the receptor for epidermal growth factor. The protein is Tyrosine-protein kinase transforming protein erbB (V-ERBB) of Galliformes.